The following is a 404-amino-acid chain: Cysteine desulfurase IscS (404 aa).

Residues 75–76 (AT), Asn-155, Gln-183, and 203–205 (SAH) each bind pyridoxal 5'-phosphate. Lys-206 is subject to N6-(pyridoxal phosphate)lysine. Thr-243 contacts pyridoxal 5'-phosphate. Cys-328 acts as the Cysteine persulfide intermediate in catalysis. Cys-328 serves as a coordination point for [2Fe-2S] cluster.

The protein belongs to the class-V pyridoxal-phosphate-dependent aminotransferase family. NifS/IscS subfamily. As to quaternary structure, homodimer. Forms a heterotetramer with IscU, interacts with other sulfur acceptors. Pyridoxal 5'-phosphate serves as cofactor.

The protein localises to the cytoplasm. It catalyses the reaction (sulfur carrier)-H + L-cysteine = (sulfur carrier)-SH + L-alanine. It participates in cofactor biosynthesis; iron-sulfur cluster biosynthesis. Functionally, master enzyme that delivers sulfur to a number of partners involved in Fe-S cluster assembly, tRNA modification or cofactor biosynthesis. Catalyzes the removal of elemental sulfur atoms from cysteine to produce alanine. Functions as a sulfur delivery protein for Fe-S cluster synthesis onto IscU, an Fe-S scaffold assembly protein, as well as other S acceptor proteins. The chain is Cysteine desulfurase IscS from Neisseria meningitidis serogroup C / serotype 2a (strain ATCC 700532 / DSM 15464 / FAM18).